We begin with the raw amino-acid sequence, 288 residues long: Homoserine kinase (288 aa).

79–89 is a binding site for ATP; it reads PLARGLGSSSS.

Belongs to the GHMP kinase family. Homoserine kinase subfamily.

The protein resides in the cytoplasm. The enzyme catalyses L-homoserine + ATP = O-phospho-L-homoserine + ADP + H(+). It functions in the pathway amino-acid biosynthesis; L-threonine biosynthesis; L-threonine from L-aspartate: step 4/5. In terms of biological role, catalyzes the ATP-dependent phosphorylation of L-homoserine to L-homoserine phosphate. This chain is Homoserine kinase, found in Streptococcus gordonii (strain Challis / ATCC 35105 / BCRC 15272 / CH1 / DL1 / V288).